The primary structure comprises 122 residues: Proteasome assembly chaperone 3 (122 aa).

Methionine 1 bears the N-acetylmethionine mark.

This sequence belongs to the PSMG3 family. Homodimer. Interacts with PSMG4. Interacts directly with alpha and beta subunits of the 20S proteasome but dissociates before the formation of half-proteasomes, probably upon recruitment of POMP.

Functionally, chaperone protein which promotes assembly of the 20S proteasome. May cooperate with PSMG1-PSMG2 heterodimers to orchestrate the correct assembly of proteasomes. The protein is Proteasome assembly chaperone 3 of Homo sapiens (Human).